A 215-amino-acid chain; its full sequence is MGARSSQTVDPVLSRRYSSESETVLVVRRRPPMVNGGGFVVSNSKQVVVFRVDGCGVLGTKGKLLLRNGDGNDLLLIRKMGGIVQALNMVHNKWEGFGYDNEGTERLVFTLKDPKDSCLVQNSSIKILVHGKPPKISSTRNNYVEIKGSFAERACNIMDSDGKAIAKVRIEKEMEEMVGNKKDLYHVIVKPNVDQSFIVGLIAILDYIHGESTIC.

Gly-2 is lipidated: N-myristoyl glycine.

It belongs to the LOR family.

Might be related to the phospholipid scramblase and tubby-like superfamily of membrane tethered transcription factors. The polypeptide is Protein LURP-one-related 16 (Arabidopsis thaliana (Mouse-ear cress)).